Consider the following 417-residue polypeptide: UDP-N-acetylglucosamine 1-carboxyvinyltransferase (417 aa).

Phosphoenolpyruvate is bound at residue K22–N23. R91 serves as a coordination point for UDP-N-acetyl-alpha-D-glucosamine. C115 functions as the Proton donor in the catalytic mechanism. C115 is subject to 2-(S-cysteinyl)pyruvic acid O-phosphothioketal. Residues R120 to L124, D304, and I326 contribute to the UDP-N-acetyl-alpha-D-glucosamine site.

Belongs to the EPSP synthase family. MurA subfamily.

Its subcellular location is the cytoplasm. The enzyme catalyses phosphoenolpyruvate + UDP-N-acetyl-alpha-D-glucosamine = UDP-N-acetyl-3-O-(1-carboxyvinyl)-alpha-D-glucosamine + phosphate. Its pathway is cell wall biogenesis; peptidoglycan biosynthesis. Its function is as follows. Cell wall formation. Adds enolpyruvyl to UDP-N-acetylglucosamine. In Nitratidesulfovibrio vulgaris (strain ATCC 29579 / DSM 644 / CCUG 34227 / NCIMB 8303 / VKM B-1760 / Hildenborough) (Desulfovibrio vulgaris), this protein is UDP-N-acetylglucosamine 1-carboxyvinyltransferase.